The following is a 213-amino-acid chain: MRLRRKAWARPELESDPKVIYNPMQYKENWQEAFGNNHPIHLELGCGRGQFINQCAELNPHINYIAIDLYDEVLVKALRKINEKALHNVRVIPMNIAKLESIFKHDQIEKIYINFCNPWPSRRHHHKRLTHPQFLSVYKKLMKDHSEIWFKTDDDELFKDSLRYFAEEGFIEKYRTFDLHQSEFTENIKTEYEEKFSNQGVKIKFGIFEVNKG.

Residues glutamate 43, aspartate 68, asparagine 95, and asparagine 117 each contribute to the S-adenosyl-L-methionine site. Residues aspartate 153 and 190–193 (TEYE) each bind substrate.

Belongs to the class I-like SAM-binding methyltransferase superfamily. TrmB family.

It catalyses the reaction guanosine(46) in tRNA + S-adenosyl-L-methionine = N(7)-methylguanosine(46) in tRNA + S-adenosyl-L-homocysteine. The protein operates within tRNA modification; N(7)-methylguanine-tRNA biosynthesis. Functionally, catalyzes the formation of N(7)-methylguanine at position 46 (m7G46) in tRNA. This chain is tRNA (guanine-N(7)-)-methyltransferase, found in Desulfitobacterium hafniense (strain DSM 10664 / DCB-2).